The chain runs to 299 residues: Circadian clock oscillator protein KaiA (299 aa).

The psR domain, binds oxidized quinones stretch occupies residues serine 9–proline 148. In terms of domain architecture, KaiA N-terminal spans serine 9–leucine 179. Residues glycine 180–arginine 188 form a flexible linker region. In terms of domain architecture, KaiA C-terminal spans asparagine 189–lysine 297.

In terms of assembly, homodimer. The KaiABC complex composition changes during the circadian cycle to control KaiC phosphorylation. Complexes KaiC(6), KaiA(2-4):KaiC(6), KaiB(6):KaiC(6) and KaiC(6):KaiB(6):KaiA(12) are among the most important forms, many form cooperatively. KaiA and CikA bind to the same region of the KaiB(fs) form and therefore compete.

In terms of biological role, key component of the KaiABC oscillator complex, which constitutes the main circadian regulator in cyanobacteria. Complex composition changes during the circadian cycle to control KaiC phosphorylation. KaiA stimulates KaiC autophosphorylation, while KaiB sequesters KaiA, leading to KaiC autodephosphorylation. KaiA binding to the KaiC CII domain during the subjective day yields KaiA(2-4):KaiC(6) complexes which stimulate KaiC autophosphorylation. Phospho-Ser-431 KaiC accumulation triggers binding of KaiB during the subjective night to form the KaiB(6):KaiC(6) complex, leading to changes in the output regulators CikA and SasA. KaiB(6):KaiC(6) formation exposes a site for KaiA binding on KaiB that sequesters KaiA from KaiC's CII domain, making the KaiC(6):KaiB(6):KaiA(12) complex resulting in KaiC autodephosphorylation. Complete dephosphorylation of KaiC leads to dissociation of KaiA(2):KaiB(1), completing 1 cycle of the Kai oscillator. Functionally, binds oxidized quinones via the N-terminal PsR domain, allowing it to sense redox changes and possibly mediate clock input. In Acaryochloris marina (strain MBIC 11017), this protein is Circadian clock oscillator protein KaiA.